Here is a 448-residue protein sequence, read N- to C-terminus: Noelin-2 (448 aa).

An N-terminal signal peptide occupies residues 1–14; that stretch reads MRKLRQTGTTIAGG. 2 coiled-coil regions span residues 52 to 79 and 130 to 187; these read RDGR…LELR and LEQY…AQKL. N-linked (GlcNAc...) asparagine glycosylation is found at N68, N149, N269, N304, N393, and N435. Residues 188–440 form the Olfactomedin-like domain; the sequence is GCGKLTGVSN…QVLYNVTLFH (253 aa). Cysteines 189 and 371 form a disulfide.

As to quaternary structure, peripherally associated with AMPAR complex. AMPAR complex consists of an inner core made of 4 pore-forming GluA/GRIA proteins (GRIA1, GRIA2, GRIA3 and GRIA4) and 4 major auxiliary subunits arranged in a twofold symmetry. One of the two pairs of distinct binding sites is occupied either by CNIH2, CNIH3 or CACNG2, CACNG3. The other harbors CACNG2, CACNG3, CACNG4, CACNG8 or GSG1L. This inner core of AMPAR complex is complemented by outer core constituents binding directly to the GluA/GRIA proteins at sites distinct from the interaction sites of the inner core constituents. Outer core constituents include at least PRRT1, PRRT2, CKAMP44/SHISA9, FRRS1L and NRN1. The proteins of the inner and outer core serve as a platform for other, more peripherally associated AMPAR constituents, including OLFM2. Alone or in combination, these auxiliary subunits control the gating and pharmacology of the AMPAR complex and profoundly impact their biogenesis and protein processing. Interacts with GRIA2. Interacts with OLFM1 and OLFM3. Interacts with SRF; the interaction promotes dissociation of SRF from the transcriptional repressor HEY2. Interacts with RUNX2. In terms of tissue distribution, expressed in the brain (at protein level). In the developing eye, first detected at 12 dpc in the retinal pigmented epithelium and preferentially expressed in differentiating retinal ganglion cells between 15 and 18 dpc. In the brain, expression is detected mainly in the olfactory bulb, cortex, piriform cortex, olfactory trabeculae, and inferior and superior colliculus. In the adult eye, expression is detected mainly in retinal ganglion cells. Expressed in carotid arteries.

The protein localises to the secreted. It is found in the synapse. It localises to the membrane. The protein resides in the nucleus. Its subcellular location is the cytoplasm. Involved in transforming growth factor beta (TGF-beta)-induced smooth muscle differentiation. TGF-beta induces expression and nuclear translocation of OLFM2 where it binds to SRF, causing its dissociation from the transcriptional repressor HEY2/HERP1 and facilitating binding of SRF to target genes. Plays a role in AMPAR complex organization. Is a regulator of vascular smooth-muscle cell (SMC) phenotypic switching, that acts by promoting RUNX2 and inhibiting MYOCD binding to SRF. SMC phenotypic switching is the process through which vascular SMCs undergo transition between a quiescent contractile phenotype and a proliferative synthetic phenotype in response to pathological stimuli. SMC phenotypic plasticity is essential for vascular development and remodeling. This is Noelin-2 (Olfm2) from Mus musculus (Mouse).